The primary structure comprises 289 residues: Protease HtpX homolog (289 aa).

Transmembrane regions (helical) follow at residues 8-28 and 29-49; these read LALLAALSGLLIAISYWVIGG and SSGLMIGIGLAAVTNLLSWYQ. His132 lines the Zn(2+) pocket. Glu133 is a catalytic residue. His136 serves as a coordination point for Zn(2+). The next 2 membrane-spanning stretches (helical) occupy residues 151–171 and 183–203; these read VAGAISFLAQMVSYSLWFGGI and LGVLLTVVLAPIAATIIQLAI. Residue Glu208 participates in Zn(2+) binding.

The protein belongs to the peptidase M48B family. Zn(2+) is required as a cofactor.

It is found in the cell inner membrane. The chain is Protease HtpX homolog from Nostoc sp. (strain PCC 7120 / SAG 25.82 / UTEX 2576).